The chain runs to 450 residues: Phosphopentomutase (450 aa).

Ser-93 acts as the Phosphoserine intermediate in catalysis. Mg(2+)-binding residues include Ser-93, Asp-231, Asp-233, and Asp-235. Phosphoserine; by autocatalysis is present on Ser-93.

This sequence belongs to the phosphohexose mutase family. In terms of assembly, homotetramer. Mg(2+) serves as cofactor. Activated by phosphorylation.

It carries out the reaction alpha-D-ribose 1-phosphate = D-ribose 5-phosphate. The enzyme catalyses 2-deoxy-alpha-D-ribose 1-phosphate = 2-deoxy-D-ribose 5-phosphate. In terms of biological role, catalyzes the conversion of deoxyribose 1-phosphate to deoxyribose 5-phosphate. Also shows weak activity with glucose 1-phosphate and mannose 1-phosphate. Could be involved in pentose biosynthesis. The sequence is that of Phosphopentomutase from Thermococcus kodakarensis (strain ATCC BAA-918 / JCM 12380 / KOD1) (Pyrococcus kodakaraensis (strain KOD1)).